Reading from the N-terminus, the 158-residue chain is NAD(P)H-quinone oxidoreductase subunit J, chloroplastic (158 aa).

Belongs to the complex I 30 kDa subunit family. NDH is composed of at least 16 different subunits, 5 of which are encoded in the nucleus.

It localises to the plastid. Its subcellular location is the chloroplast thylakoid membrane. The catalysed reaction is a plastoquinone + NADH + (n+1) H(+)(in) = a plastoquinol + NAD(+) + n H(+)(out). It catalyses the reaction a plastoquinone + NADPH + (n+1) H(+)(in) = a plastoquinol + NADP(+) + n H(+)(out). Functionally, NDH shuttles electrons from NAD(P)H:plastoquinone, via FMN and iron-sulfur (Fe-S) centers, to quinones in the photosynthetic chain and possibly in a chloroplast respiratory chain. The immediate electron acceptor for the enzyme in this species is believed to be plastoquinone. Couples the redox reaction to proton translocation, and thus conserves the redox energy in a proton gradient. The protein is NAD(P)H-quinone oxidoreductase subunit J, chloroplastic of Eucalyptus globulus subsp. globulus (Tasmanian blue gum).